A 455-amino-acid polypeptide reads, in one-letter code: MHILVVGVDYKSAPIEIREKISFQPDELAEAMLRLKGEKSVLENIIVSTCNRTEIYAVVDQLHTGRYYIKTFLSEWFSLPKEELSPFLKFYESDAAIEHLFRVACGLDSMVIGETQILGQVRSSFKTAQAEKTIGTIFNELFKQAVTVGKRTHAETDIGANAVSVSYAAVELAKKIFGSLSNKHILILGAGKMGELAAENLHGQGIGKVTVINRTFLKAKALADRFSGEARSLNQLEHALAEADILISSTGASDFVVSKEMMERAGRQRKGRPLFMVDIAVPRDLDPALNDLEGVFLYDIDDLEGIVEANLQERRETAEKVELFIEAAIVEFKQWLNTLGVVPVISALREKALSIQSDTMQSIERKLPHLTVREKKLLSKHTKSIINQMLRDPILKAKELAAEADSEEKLKLFMQIFDIEEEAGRQLDKSLDNRQTVHSFQKAEAKTGLRPLVSE.

Residues 49 to 52 (TCNR), Ser-109, 114 to 116 (ETQ), and Gln-120 each bind substrate. The active-site Nucleophile is Cys-50. 189–194 (GAGKMG) contacts NADP(+).

The protein belongs to the glutamyl-tRNA reductase family. As to quaternary structure, homodimer.

The catalysed reaction is (S)-4-amino-5-oxopentanoate + tRNA(Glu) + NADP(+) = L-glutamyl-tRNA(Glu) + NADPH + H(+). Its pathway is porphyrin-containing compound metabolism; protoporphyrin-IX biosynthesis; 5-aminolevulinate from L-glutamyl-tRNA(Glu): step 1/2. In terms of biological role, catalyzes the NADPH-dependent reduction of glutamyl-tRNA(Glu) to glutamate 1-semialdehyde (GSA). The chain is Glutamyl-tRNA reductase from Bacillus velezensis (strain DSM 23117 / BGSC 10A6 / LMG 26770 / FZB42) (Bacillus amyloliquefaciens subsp. plantarum).